The chain runs to 532 residues: CTP synthase (532 aa).

An amidoligase domain region spans residues 1–267 (MTKYIFVTGG…DDIVLEHLQL (267 aa)). Ser13 provides a ligand contact to CTP. Ser13 lines the UTP pocket. An ATP-binding site is contributed by 14-19 (SIGKGI). Residue Tyr54 participates in L-glutamine binding. Asp71 is a binding site for ATP. Mg(2+)-binding residues include Asp71 and Glu141. CTP contacts are provided by residues 148–150 (DIE), 188–193 (KTKPTQ), and Lys224. Residues 188 to 193 (KTKPTQ) and Lys224 each bind UTP. The 241-residue stretch at 292 to 532 (RIGLVGKYVS…DFVGAALNNK (241 aa)) folds into the Glutamine amidotransferase type-1 domain. Gly354 provides a ligand contact to L-glutamine. Catalysis depends on Cys381, which acts as the Nucleophile; for glutamine hydrolysis. L-glutamine is bound by residues 382–385 (LGMQ), Glu405, and Arg462. Active-site residues include His507 and Glu509.

This sequence belongs to the CTP synthase family. Homotetramer.

It carries out the reaction UTP + L-glutamine + ATP + H2O = CTP + L-glutamate + ADP + phosphate + 2 H(+). The enzyme catalyses L-glutamine + H2O = L-glutamate + NH4(+). It catalyses the reaction UTP + NH4(+) + ATP = CTP + ADP + phosphate + 2 H(+). The protein operates within pyrimidine metabolism; CTP biosynthesis via de novo pathway; CTP from UDP: step 2/2. Allosterically activated by GTP, when glutamine is the substrate; GTP has no effect on the reaction when ammonia is the substrate. The allosteric effector GTP functions by stabilizing the protein conformation that binds the tetrahedral intermediate(s) formed during glutamine hydrolysis. Inhibited by the product CTP, via allosteric rather than competitive inhibition. Functionally, catalyzes the ATP-dependent amination of UTP to CTP with either L-glutamine or ammonia as the source of nitrogen. Regulates intracellular CTP levels through interactions with the four ribonucleotide triphosphates. The chain is CTP synthase from Listeria monocytogenes serotype 4b (strain F2365).